The chain runs to 592 residues: Arginine--tRNA ligase (592 aa).

Residues 139-149 (ANPNGPLHIGH) carry the 'HIGH' region motif.

It belongs to the class-I aminoacyl-tRNA synthetase family.

Its subcellular location is the cytoplasm. The catalysed reaction is tRNA(Arg) + L-arginine + ATP = L-arginyl-tRNA(Arg) + AMP + diphosphate. In Methanopyrus kandleri (strain AV19 / DSM 6324 / JCM 9639 / NBRC 100938), this protein is Arginine--tRNA ligase.